We begin with the raw amino-acid sequence, 339 residues long: Photosystem II assembly lipoprotein Ycf48 (339 aa).

A signal peptide spans 1–22 (MVIVKSWQKIFTLLVVLLLCIG). A lipid anchor (N-palmitoyl cysteine) is attached at Cys-23. Residue Cys-23 is the site of S-diacylglycerol cysteine attachment.

This sequence belongs to the Ycf48 family. In terms of assembly, part of early PSII assembly complexes which includes D1 (psbA) and PsbI; not found in mature PSII. Binds to the lumenal side of PSII complexes. Interacts with YidC.

It is found in the cellular thylakoid membrane. A factor required for optimal assembly of photosystem II (PSII), acting in the early stages of PSII assembly. Also plays a role in replacement of photodamaged D1 (psbA). Assists YidC in synthesis of chlorophyll-binding proteins. This is Photosystem II assembly lipoprotein Ycf48 from Nostoc sp. (strain PCC 7120 / SAG 25.82 / UTEX 2576).